The primary structure comprises 144 residues: Arginine decarboxylase proenzyme (144 aa).

Serine 80 (schiff-base intermediate with substrate; via pyruvic acid) is an active-site residue. At serine 80 the chain carries Pyruvic acid (Ser); by autocatalysis. Residue histidine 85 is the Proton acceptor; for processing activity of the active site. Cysteine 100 functions as the Proton donor; for catalytic activity in the catalytic mechanism.

Belongs to the prokaryotic AdoMetDC family. Type 1 subfamily. In terms of assembly, heterooctamer of four alpha and four beta chains arranged as a tetramer of alpha/beta heterodimers. Pyruvate is required as a cofactor. In terms of processing, is synthesized initially as an inactive proenzyme. Formation of the active enzyme involves a self-maturation process in which the active site pyruvoyl group is generated from an internal serine residue via an autocatalytic post-translational modification. Two non-identical subunits are generated from the proenzyme in this reaction, and the pyruvate is formed at the N-terminus of the alpha chain, which is derived from the carboxyl end of the proenzyme. The post-translation cleavage follows an unusual pathway, termed non-hydrolytic serinolysis, in which the side chain hydroxyl group of the serine supplies its oxygen atom to form the C-terminus of the beta chain, while the remainder of the serine residue undergoes an oxidative deamination to produce ammonia and the pyruvoyl group blocking the N-terminus of the alpha chain.

It catalyses the reaction L-arginine + H(+) = agmatine + CO2. It functions in the pathway amine and polyamine biosynthesis; agmatine biosynthesis; agmatine from L-arginine: step 1/1. In terms of biological role, specifically catalyzes the decarboxylation of L-arginine to agmatine. Has no S-adenosylmethionine decarboxylase (AdoMetDC) activity. In Ignicoccus hospitalis (strain KIN4/I / DSM 18386 / JCM 14125), this protein is Arginine decarboxylase proenzyme.